We begin with the raw amino-acid sequence, 2543 residues long: Highly reducing polyketide synthase GPY1 (2543 aa).

In terms of domain architecture, Ketosynthase family 3 (KS3) spans arginine 9–phenylalanine 435. Residues cysteine 182, histidine 318, and histidine 358 each act as for beta-ketoacyl synthase activity in the active site. A malonyl-CoA:ACP transacylase (MAT) domain region spans residues threonine 574–alanine 881. Residues histidine 953 to lysine 1089 are N-terminal hotdog fold. The dehydratase (DH) domain stretch occupies residues histidine 953–aspartate 1253. Residues histidine 953–threonine 1256 form the PKS/mFAS DH domain. Histidine 985 acts as the Proton acceptor; for dehydratase activity in catalysis. The C-terminal hotdog fold stretch occupies residues methionine 1103–threonine 1256. Aspartate 1169 (proton donor; for dehydratase activity) is an active-site residue. Positions asparagine 1399–alanine 1587 are methyltransferase (CMet) domain. Positions glycine 1830–valine 2136 are enoyl reductase (ER) domain. The tract at residues threonine 2161–glutamate 2335 is ketoreductase (KR) domain. A Carrier domain is found at alanine 2464–isoleucine 2541. Serine 2501 is subject to O-(pantetheine 4'-phosphoryl)serine.

In terms of biological role, highly reducing polyketide synthase; part of the gene cluster that mediates the biosynthesis of gibepyrone A, a 2H-pyran-2-one metabolite exhibiting a moderate antimicrobial activity against Gram-positive bacteria and yeasts. The highly reducing polyketide synthase GPY1 is sufficient to produce gibepyrone A. GPY1 uses an acetyl-CoA starter unit, three malonyl-CoA extender units, and two SAM-dependent methylations to establish the gibepyrone A carbon backbone, followed by product release upon intramolecular cyclization. The gibepyrone A derivatives gibepyrones B and D are produced by cluster-independent P450 monooxygenases, probably to protect the fungus from the toxic product. In contrast, the formation of gibepyrones E and F from gibepyrone A is a spontaneous process and independent of enzymatic activity. This is Highly reducing polyketide synthase GPY1 from Gibberella fujikuroi (strain CBS 195.34 / IMI 58289 / NRRL A-6831) (Bakanae and foot rot disease fungus).